Reading from the N-terminus, the 537-residue chain is Woronin body major protein hexA (537 aa).

Composition is skewed to basic and acidic residues over residues 1-17, 59-70, and 116-134; these read MYSV…RDAQ, DRTSHVEREDTR, and DSRV…RSEN. 4 disordered regions span residues 1-20, 59-79, 116-200, and 269-295; these read MYSV…QRTA, DRTS…PDPR, DSRV…KPVY, and PKPL…SRPS. Over residues 135 to 144 the composition is skewed to low complexity; that stretch reads NAKQNKNKNN. Over residues 272–281 the composition is skewed to basic and acidic residues; the sequence is LETRKGDSFS.

It belongs to the eIF-5A family. Hex1 subfamily. As to quaternary structure, forms oligomers. Self-assembles into hexagonal rods. Binds directly or indirectly to the Woronin body tether lah.

The protein resides in the cell septum. Its subcellular location is the cytoplasm. Major component of Woronin bodies, fungal-specific organelles that occlude septal pores in order to separate intact from damaged compartments. HexA binds directly or indirectly to the Woronin body tether that in turn is anchored at the rim of the septal pore. Woronin bodies are important for stress resistance and virulence. This Aspergillus fumigatus (strain ATCC MYA-4609 / CBS 101355 / FGSC A1100 / Af293) (Neosartorya fumigata) protein is Woronin body major protein hexA.